A 142-amino-acid chain; its full sequence is Putative pterin-4-alpha-carbinolamine dehydratase (142 aa).

It belongs to the pterin-4-alpha-carbinolamine dehydratase family.

The enzyme catalyses (4aS,6R)-4a-hydroxy-L-erythro-5,6,7,8-tetrahydrobiopterin = (6R)-L-erythro-6,7-dihydrobiopterin + H2O. The sequence is that of Putative pterin-4-alpha-carbinolamine dehydratase (pcbd-1) from Caenorhabditis elegans.